A 199-amino-acid chain; its full sequence is UPF0301 protein Anae109_0457 (199 aa).

This sequence belongs to the UPF0301 (AlgH) family.

The chain is UPF0301 protein Anae109_0457 from Anaeromyxobacter sp. (strain Fw109-5).